The chain runs to 376 residues: Actin-related protein T1 (376 aa).

The protein belongs to the actin family.

The protein resides in the cytoplasm. It is found in the cytoskeleton. It localises to the nucleus. Its subcellular location is the cytoplasmic vesicle. The protein localises to the secretory vesicle. The protein resides in the acrosome. Negatively regulates the Hedgehog (SHH) signaling. Binds to the promoter of the SHH signaling mediator, GLI1, and inhibits its expression. The sequence is that of Actin-related protein T1 (Actrt1) from Rattus norvegicus (Rat).